We begin with the raw amino-acid sequence, 431 residues long: MIQPSTLPGMMELLPEDQLVFDTIKRKIEDVFIKNAFFSIDTPAIEKLDVLLSKGGGETSKQVFRIDNSKKNQGLRFDLTVPLAKYVSMYMQDLAFPFRRYQIAKVYRGERNQKGRYKEFYQCDIDIIGNEKLSLYNDAEIVKCMYEALKSIDVPEFEFQFNNRKILNGYFSYLGIDDFESCLRVIDKLDKIGIDNVKEELSKINLDASKIDTLLKFLEIDGTNQEIIEKLESLNIDNELFTCGVNELKFVYQDILSLGVNPENIKINLSITRGLDYYTGSVFETFFKDYREIGSICSGGRYDSLANNFTKSKLPGVGMSIGLTRLFYQLQELNLVKGKQTNFDCIIIPMKGYEKNAVKLMNDLRNSSVKCMSYLEDDKLKKKFNYADKLSVKYVIIIGQDEVEQNKFTLRNMENGNQELLELNEIIEKLK.

It belongs to the class-II aminoacyl-tRNA synthetase family. In terms of assembly, homodimer.

The protein localises to the cytoplasm. The catalysed reaction is tRNA(His) + L-histidine + ATP = L-histidyl-tRNA(His) + AMP + diphosphate + H(+). The chain is Histidine--tRNA ligase from Finegoldia magna (strain ATCC 29328 / DSM 20472 / WAL 2508) (Peptostreptococcus magnus).